A 78-amino-acid polypeptide reads, in one-letter code: Large ribosomal subunit protein bL28 (78 aa).

Residues 1 to 20 form a disordered region; that stretch reads MSRVCQVTGKGPVTGNNISH.

It belongs to the bacterial ribosomal protein bL28 family.

In Stutzerimonas stutzeri (strain A1501) (Pseudomonas stutzeri), this protein is Large ribosomal subunit protein bL28.